Here is a 124-residue protein sequence, read N- to C-terminus: Putative outer membrane protein CT_569 (124 aa).

Positions 1 to 31 (MKKTKKRKQSITLVEMMVVITLIGIIGGALA) are cleaved as a signal peptide.

Its subcellular location is the cell outer membrane. This is Putative outer membrane protein CT_569 from Chlamydia trachomatis serovar D (strain ATCC VR-885 / DSM 19411 / UW-3/Cx).